Consider the following 105-residue polypeptide: Met repressor (105 aa).

It belongs to the MetJ family. Homodimer.

The protein resides in the cytoplasm. This regulatory protein, when combined with SAM (S-adenosylmethionine) represses the expression of the methionine regulon and of enzymes involved in SAM synthesis. This Vibrio cholerae serotype O1 (strain ATCC 39541 / Classical Ogawa 395 / O395) protein is Met repressor.